Reading from the N-terminus, the 98-residue chain is Integration host factor subunit alpha (98 aa).

It belongs to the bacterial histone-like protein family. In terms of assembly, heterodimer of an alpha and a beta chain.

Functionally, this protein is one of the two subunits of integration host factor, a specific DNA-binding protein that functions in genetic recombination as well as in transcriptional and translational control. The protein is Integration host factor subunit alpha of Mannheimia succiniciproducens (strain KCTC 0769BP / MBEL55E).